A 424-amino-acid polypeptide reads, in one-letter code: UPF0597 protein Sputw3181_2955 (424 aa).

It belongs to the UPF0597 family.

This Shewanella sp. (strain W3-18-1) protein is UPF0597 protein Sputw3181_2955.